Here is a 478-residue protein sequence, read N- to C-terminus: Pathogenicity cluster 5 protein d (478 aa).

The N-terminal stretch at 1 to 19 (MQIQNLIAALAGMAVVAEA) is a signal peptide. Disordered regions lie at residues 35-89 (RQNK…GQAN) and 299-400 (NGGK…GGKG). Positions 38–64 (KGGNNNNNNNNNNNNNNNNNKNNGGNN) are enriched in low complexity. The segment covering 65 to 89 (QLCLNPNNVQKGSQQAGTPKQGQAN) has biased composition (polar residues). Positions 316–326 (NNDGGGGGNDG) are enriched in gly residues. Composition is skewed to low complexity over residues 327–348 (GNNS…QNGA) and 379–393 (TQAG…TNGN). N-linked (GlcNAc...) asparagine glycosylation is found at Asn-328 and Asn-332.

It is found in the secreted. Functionally, secreted protein required for appressorial penetration of intact host epidermal cells and for pathogenicit, but not for subsequent biotrophic and necrotrophic colonization of leaves. This Colletotrichum graminicola (strain M1.001 / M2 / FGSC 10212) (Maize anthracnose fungus) protein is Pathogenicity cluster 5 protein d.